The sequence spans 289 residues: N-acetylmuramoyl-L-alanine amidase AmiA (289 aa).

The tat-type signal signal peptide spans 1–34 (MSTFKPLKTLTSRRQVLKAGLAALTLSGMSQAIA). Residues 39-63 (LKTSNGHSKPKAKKSGGKRVVVLDP) are disordered. The segment covering 46–55 (SKPKAKKSGG) has biased composition (basic residues). Residues 59–273 (VVLDPGHGGI…IATAIAEGVI (215 aa)) enclose the MurNAc-LAA domain.

This sequence belongs to the N-acetylmuramoyl-L-alanine amidase 3 family. Post-translationally, exported by the Tat system. The position of the signal peptide cleavage has not been experimentally proven. Can also be exported by the Sec system.

It is found in the periplasm. The catalysed reaction is Hydrolyzes the link between N-acetylmuramoyl residues and L-amino acid residues in certain cell-wall glycopeptides.. In terms of biological role, cell-wall hydrolase involved in septum cleavage during cell division. Can also act as powerful autolysin in the presence of murein synthesis inhibitors. The protein is N-acetylmuramoyl-L-alanine amidase AmiA (amiA) of Escherichia coli (strain K12).